A 499-amino-acid polypeptide reads, in one-letter code: Putative protein phosphatase 2C 76 (499 aa).

An N-terminal signal peptide occupies residues 1 to 34; the sequence is MRLGCSGRRRRLLRAALLRLVVLVLVAPPRRCAG. Residues 67-101 form a disordered region; it reads AGSGGEGDGDRRSSSSSPPPPPHPRGCHVAVDRGR. One can recognise a PPM-type phosphatase domain in the interval 92 to 457; that stretch reads GCHVAVDRGR…DNVAAVIVPL (366 aa). Residues Asp-138 and Gly-139 each contribute to the Mn(2+) site. The disordered stretch occupies residues 286 to 306; it reads KKTSVVSGKRRRKRNSNNRDD. Mn(2+) contacts are provided by Asp-397 and Asp-448.

It belongs to the PP2C family. Requires Mg(2+) as cofactor. The cofactor is Mn(2+).

It carries out the reaction O-phospho-L-seryl-[protein] + H2O = L-seryl-[protein] + phosphate. The enzyme catalyses O-phospho-L-threonyl-[protein] + H2O = L-threonyl-[protein] + phosphate. In Oryza sativa subsp. japonica (Rice), this protein is Putative protein phosphatase 2C 76.